Reading from the N-terminus, the 831-residue chain is Vi polysaccharide biosynthesis protein TviD (831 aa).

It functions in the pathway glycan metabolism; Vi-antigen biosynthesis. The protein operates within capsule biogenesis; capsule polysaccharide biosynthesis. May be required for maturation of the Vi polysaccharide. The protein is Vi polysaccharide biosynthesis protein TviD (tviD) of Salmonella typhi.